We begin with the raw amino-acid sequence, 151 residues long: SsrA-binding protein (151 aa).

Belongs to the SmpB family.

The protein resides in the cytoplasm. In terms of biological role, required for rescue of stalled ribosomes mediated by trans-translation. Binds to transfer-messenger RNA (tmRNA), required for stable association of tmRNA with ribosomes. tmRNA and SmpB together mimic tRNA shape, replacing the anticodon stem-loop with SmpB. tmRNA is encoded by the ssrA gene; the 2 termini fold to resemble tRNA(Ala) and it encodes a 'tag peptide', a short internal open reading frame. During trans-translation Ala-aminoacylated tmRNA acts like a tRNA, entering the A-site of stalled ribosomes, displacing the stalled mRNA. The ribosome then switches to translate the ORF on the tmRNA; the nascent peptide is terminated with the 'tag peptide' encoded by the tmRNA and targeted for degradation. The ribosome is freed to recommence translation, which seems to be the essential function of trans-translation. This chain is SsrA-binding protein, found in Geotalea uraniireducens (strain Rf4) (Geobacter uraniireducens).